Here is a 589-residue protein sequence, read N- to C-terminus: Proton pump-interactor 2 (589 aa).

Positions 205 to 245 (EDSLAEKEASINRVKSMAVELNEVKKELDAITWKINHLSDK) form a coiled coil. 4 stretches are compositionally biased toward basic and acidic residues: residues 370 to 383 (KGGE…REDS), 395 to 408 (TDKR…KAMD), 426 to 450 (VYEK…REEQ), and 504 to 534 (ESDH…KERS). Disordered regions lie at residues 370–450 (KGGE…REEQ) and 485–534 (KECE…KERS). A coiled-coil region spans residues 431–500 (KKEEEEVDEE…AKKKAAANSS (70 aa)). A helical membrane pass occupies residues 568–588 (WVWGLSSAALAVALFLVVLLL).

It belongs to the plant Proton pump-interactor protein family. As to expression, expressed in seedlings and flowers.

It localises to the cell membrane. It is found in the endoplasmic reticulum membrane. In terms of biological role, may regulate plasma membrane ATPase activity. This is Proton pump-interactor 2 (PPI2) from Arabidopsis thaliana (Mouse-ear cress).